A 535-amino-acid chain; its full sequence is Glutamate--cysteine ligase (535 aa).

It belongs to the glutamate--cysteine ligase type 1 family. Type 1 subfamily.

The catalysed reaction is L-cysteine + L-glutamate + ATP = gamma-L-glutamyl-L-cysteine + ADP + phosphate + H(+). It participates in sulfur metabolism; glutathione biosynthesis; glutathione from L-cysteine and L-glutamate: step 1/2. This Pseudomonas savastanoi pv. phaseolicola (strain 1448A / Race 6) (Pseudomonas syringae pv. phaseolicola (strain 1448A / Race 6)) protein is Glutamate--cysteine ligase.